The sequence spans 668 residues: UvrABC system protein B (668 aa).

Residues 25–414 enclose the Helicase ATP-binding domain; that stretch reads RGLHAGARFQ…IVEQLIRPTG (390 aa). Residue 38 to 45 participates in ATP binding; the sequence is GVTGSGKT. The Beta-hairpin signature appears at 91 to 114; sequence YYDYYQPESYVPARDLYIEKDASI. The Helicase C-terminal domain occupies 431–594; sequence DICQRVKACS…TIKKSIEDIL (164 aa). The UVR domain occupies 627-662; it reads KKMVQALRLHMKVCARELRFEEAALIRDKILQLQRQ.

The protein belongs to the UvrB family. Forms a heterotetramer with UvrA during the search for lesions. Interacts with UvrC in an incision complex.

The protein resides in the cytoplasm. In terms of biological role, the UvrABC repair system catalyzes the recognition and processing of DNA lesions. A damage recognition complex composed of 2 UvrA and 2 UvrB subunits scans DNA for abnormalities. Upon binding of the UvrA(2)B(2) complex to a putative damaged site, the DNA wraps around one UvrB monomer. DNA wrap is dependent on ATP binding by UvrB and probably causes local melting of the DNA helix, facilitating insertion of UvrB beta-hairpin between the DNA strands. Then UvrB probes one DNA strand for the presence of a lesion. If a lesion is found the UvrA subunits dissociate and the UvrB-DNA preincision complex is formed. This complex is subsequently bound by UvrC and the second UvrB is released. If no lesion is found, the DNA wraps around the other UvrB subunit that will check the other stand for damage. The chain is UvrABC system protein B from Treponema pallidum (strain Nichols).